Here is a 220-residue protein sequence, read N- to C-terminus: Protein-L-isoaspartate O-methyltransferase (220 aa).

The active site involves S69.

It belongs to the methyltransferase superfamily. L-isoaspartyl/D-aspartyl protein methyltransferase family.

It is found in the cytoplasm. The catalysed reaction is [protein]-L-isoaspartate + S-adenosyl-L-methionine = [protein]-L-isoaspartate alpha-methyl ester + S-adenosyl-L-homocysteine. Catalyzes the methyl esterification of L-isoaspartyl residues in peptides and proteins that result from spontaneous decomposition of normal L-aspartyl and L-asparaginyl residues. It plays a role in the repair and/or degradation of damaged proteins. The polypeptide is Protein-L-isoaspartate O-methyltransferase (Alcanivorax borkumensis (strain ATCC 700651 / DSM 11573 / NCIMB 13689 / SK2)).